The sequence spans 412 residues: MLPQNKDQVLPQTSVLPGCPPWGFSQLVDSSPHNLQPLSAHQSLRPSHPPFFSTQSHHPSFSPPASPSPGFQFGSCDPNSDFVPHPCSPSLPSSPTFFHQNYLSLPNPRASSPSNHWLYPSPPLTPSFSPSQPQNSSLPHSPCQSPSHPEDLHSSTLTSPGPSPPSQRLHSNRQTWRWHQYRDTGSGSPGVVERCVPSEKDPAQFRDPGALAQALVVQLGHRRIAHDLRLLLLQHLWLGRTGQAPVVEYPICLVCLRPRSPSCPLPKYRTGPRLLAFPQLLPCVEGQESGPLRIGIGFGLRLPQGQARALHLLPEKRPKEVGPQGKDPQACGHPSPAFQPPAAQARADPAPGTPSQTRSFRSAGLQSPNSPRCFSGPPPRAPKQATTSPKPRPCPAPKRPVSLELILQKSSV.

The segment covering 33 to 45 (HNLQPLSAHQSLR) has biased composition (polar residues). Disordered stretches follow at residues 33-75 (HNLQ…QFGS), 123-174 (PLTP…SNRQ), and 318-412 (PKEV…KSSV). Composition is skewed to low complexity over residues 126 to 142 (PSFS…PHSP) and 334 to 350 (PSPA…ADPA). Over residues 353–372 (TPSQTRSFRSAGLQSPNSPR) the composition is skewed to polar residues.

The polypeptide is Proline-rich protein 30 (PRR30) (Macaca fascicularis (Crab-eating macaque)).